Consider the following 394-residue polypeptide: Dual-specificity RNA methyltransferase RlmN (394 aa).

Residue Glu115 is the Proton acceptor of the active site. A Radical SAM core domain is found at 121-363 (DEGRGTLCVS…SPIRTPRGED (243 aa)). A disulfide bridge links Cys128 with Cys368. [4Fe-4S] cluster is bound by residues Cys135, Cys139, and Cys142. S-adenosyl-L-methionine is bound by residues 194-195 (GE), Ser226, 248-250 (SFH), and Asn325. The S-methylcysteine intermediate role is filled by Cys368.

Belongs to the radical SAM superfamily. RlmN family. The cofactor is [4Fe-4S] cluster.

The protein resides in the cytoplasm. It catalyses the reaction adenosine(2503) in 23S rRNA + 2 reduced [2Fe-2S]-[ferredoxin] + 2 S-adenosyl-L-methionine = 2-methyladenosine(2503) in 23S rRNA + 5'-deoxyadenosine + L-methionine + 2 oxidized [2Fe-2S]-[ferredoxin] + S-adenosyl-L-homocysteine. The catalysed reaction is adenosine(37) in tRNA + 2 reduced [2Fe-2S]-[ferredoxin] + 2 S-adenosyl-L-methionine = 2-methyladenosine(37) in tRNA + 5'-deoxyadenosine + L-methionine + 2 oxidized [2Fe-2S]-[ferredoxin] + S-adenosyl-L-homocysteine. In terms of biological role, specifically methylates position 2 of adenine 2503 in 23S rRNA and position 2 of adenine 37 in tRNAs. m2A2503 modification seems to play a crucial role in the proofreading step occurring at the peptidyl transferase center and thus would serve to optimize ribosomal fidelity. This chain is Dual-specificity RNA methyltransferase RlmN, found in Roseobacter denitrificans (strain ATCC 33942 / OCh 114) (Erythrobacter sp. (strain OCh 114)).